The sequence spans 297 residues: Phosphatidylserine decarboxylase proenzyme (297 aa).

Active-site charge relay system; for autoendoproteolytic cleavage activity residues include aspartate 90, histidine 147, and serine 252. Serine 252 serves as the catalytic Schiff-base intermediate with substrate; via pyruvic acid; for decarboxylase activity. Serine 252 carries the post-translational modification Pyruvic acid (Ser); by autocatalysis.

This sequence belongs to the phosphatidylserine decarboxylase family. PSD-B subfamily. Prokaryotic type I sub-subfamily. As to quaternary structure, heterodimer of a large membrane-associated beta subunit and a small pyruvoyl-containing alpha subunit. It depends on pyruvate as a cofactor. Post-translationally, is synthesized initially as an inactive proenzyme. Formation of the active enzyme involves a self-maturation process in which the active site pyruvoyl group is generated from an internal serine residue via an autocatalytic post-translational modification. Two non-identical subunits are generated from the proenzyme in this reaction, and the pyruvate is formed at the N-terminus of the alpha chain, which is derived from the carboxyl end of the proenzyme. The autoendoproteolytic cleavage occurs by a canonical serine protease mechanism, in which the side chain hydroxyl group of the serine supplies its oxygen atom to form the C-terminus of the beta chain, while the remainder of the serine residue undergoes an oxidative deamination to produce ammonia and the pyruvoyl prosthetic group on the alpha chain. During this reaction, the Ser that is part of the protease active site of the proenzyme becomes the pyruvoyl prosthetic group, which constitutes an essential element of the active site of the mature decarboxylase.

The protein resides in the cell membrane. It carries out the reaction a 1,2-diacyl-sn-glycero-3-phospho-L-serine + H(+) = a 1,2-diacyl-sn-glycero-3-phosphoethanolamine + CO2. It participates in phospholipid metabolism; phosphatidylethanolamine biosynthesis; phosphatidylethanolamine from CDP-diacylglycerol: step 2/2. Catalyzes the formation of phosphatidylethanolamine (PtdEtn) from phosphatidylserine (PtdSer). The sequence is that of Phosphatidylserine decarboxylase proenzyme from Stutzerimonas stutzeri (strain A1501) (Pseudomonas stutzeri).